The chain runs to 146 residues: Ribonuclease H (146 aa).

An RNase H type-1 domain is found at 1–141; it reads MKHVDIFTDG…ADELARKGME (141 aa). Asp-9, Glu-47, Asp-69, and Asp-133 together coordinate Mg(2+). The disordered stretch occupies residues 123-146; it reads HAGHPENERADELARKGMEPFKRR. Over residues 125-146 the composition is skewed to basic and acidic residues; that stretch reads GHPENERADELARKGMEPFKRR.

This sequence belongs to the RNase H family. Monomer. The cofactor is Mg(2+).

It is found in the cytoplasm. The catalysed reaction is Endonucleolytic cleavage to 5'-phosphomonoester.. Its function is as follows. Endonuclease that specifically degrades the RNA of RNA-DNA hybrids. The polypeptide is Ribonuclease H (Agrobacterium fabrum (strain C58 / ATCC 33970) (Agrobacterium tumefaciens (strain C58))).